Reading from the N-terminus, the 115-residue chain is Large ribosomal subunit protein bL20 (115 aa).

The protein belongs to the bacterial ribosomal protein bL20 family.

Binds directly to 23S ribosomal RNA and is necessary for the in vitro assembly process of the 50S ribosomal subunit. It is not involved in the protein synthesizing functions of that subunit. The polypeptide is Large ribosomal subunit protein bL20 (Prochlorococcus marinus (strain MIT 9303)).